The sequence spans 702 residues: Solute carrier organic anion transporter family member 1B3 (702 aa).

Residues 1–28 (MDQHQHLNKTAESASSEKKKTRRCNGFK) are Cytoplasmic-facing. A helical transmembrane segment spans residues 29 to 48 (MFLAALSFSYIAKALGGIIM). The Extracellular portion of the chain corresponds to 49-67 (KISITQIERRFDISSSLAG). The chain crosses the membrane as a helical span at residues 68 to 88 (LIDGSFEIGNLLVIVFVSYFG). Topologically, residues 89–94 (SKLHRP) are cytoplasmic. A helical transmembrane segment spans residues 95-119 (KLIGIGCLLMGTGSILTSLPHFFMG). The Extracellular portion of the chain corresponds to 120–168 (YYRYSKETHINPSENSTSSLSTCLINQTLSFNGTSPEIVEKDCVKESGS). N134, N145, and N151 each carry an N-linked (GlcNAc...) asparagine glycan. A helical membrane pass occupies residues 169–197 (HMWIYVFMGNMLRGIGETPIVPLGISYID). Over 198–216 (DFAKEGHSSLYLGSLNAIG) the chain is Cytoplasmic. The helical transmembrane segment at 217–237 (MIGPVIGFALGSLFAKMYVDI) threads the bilayer. Over 238–255 (GYVDLSTIRITPKDSRWV) the chain is Extracellular. A helical membrane pass occupies residues 256 to 280 (GAWWLGFLVSGLFSIISSIPFFFLP). Residues 281–331 (KNPNKPQKERKISLSLHVLKTNDDRNQTANLTNQGKNVTKNVTGFFQSLKS) are Cytoplasmic-facing. A phosphoserine mark is found at S293 and S295. The helical transmembrane segment at 332-353 (ILTNPLYVIFLLLTLLQVSSFI) threads the bilayer. At 354–373 (GSFTYVFKYMEQQYGQSASH) the chain is on the extracellular side. The helical transmembrane segment at 374–397 (ANFLLGIITIPTVATGMFLGGFII) threads the bilayer. The Cytoplasmic segment spans residues 398–401 (KKFK). The helical transmembrane segment at 402–425 (LSLVGIAKFSFLTSMISFLFQLLY) threads the bilayer. Residues 426 to 537 (FPLICESKSV…NTCTRKFFIY (112 aa)) lie on the Extracellular side of the membrane. An N-linked (GlcNAc...) asparagine glycan is attached at N445. Positions 453–508 (DVPLSYCNSECNCDESQWEPVCGNNGITYLSPCLAGCKSSSGIKKHTVFYNCSCVE) constitute a Kazal-like domain. 3 disulfide bridges follow: C459/C489, C465/C485, and C474/C506. 2 N-linked (GlcNAc...) asparagine glycosylation sites follow: N503 and N516. Residues 538 to 560 (VAIQVINSLFSATGGTTFILLTV) traverse the membrane as a helical segment. At 561–569 (KIVQPELKA) the chain is on the cytoplasmic side. A helical transmembrane segment spans residues 570 to 595 (LAMGFQSMVIRTLGGILAPIYFGALI). Over 596–629 (DKTCMKWSTNSCGAQGACRIYNSVFFGRVYLGLS) the chain is Extracellular. A helical membrane pass occupies residues 630–647 (IALRFPALVLYIVFIFAM). The Cytoplasmic segment spans residues 648–695 (KKKFQGKDTKASDNERKVMDEANLEFLNNGEHFVPSAGTDSKTCNLDM). S683 carries the post-translational modification Phosphoserine.

Belongs to the organo anion transporter (TC 2.A.60) family. N-glycosylated. Highly expressed in liver, in particular at the basolateral membrane of hepatocytes near the central vein. Expressed in the placenta. In testis, primarily localized to the basal membrane of Sertoli cells and weakly expressed in Leydig cells and within the tubules.

The protein resides in the basolateral cell membrane. The protein localises to the basal cell membrane. It carries out the reaction estrone 3-sulfate(out) + hydrogencarbonate(in) = estrone 3-sulfate(in) + hydrogencarbonate(out). The catalysed reaction is 17beta-estradiol 17-O-(beta-D-glucuronate)(out) = 17beta-estradiol 17-O-(beta-D-glucuronate)(in). The enzyme catalyses taurocholate(out) = taurocholate(in). It catalyses the reaction estrone 3-sulfate(out) = estrone 3-sulfate(in). It carries out the reaction dehydroepiandrosterone 3-sulfate(out) = dehydroepiandrosterone 3-sulfate(in). The catalysed reaction is leukotriene C4(out) = leukotriene C4(in). The enzyme catalyses L-thyroxine(out) = L-thyroxine(in). It catalyses the reaction prostaglandin E2(out) = prostaglandin E2(in). It carries out the reaction (4E,15E)-bilirubin IXalpha C8-beta-D-glucuronoside(out) = (4E,15E)-bilirubin IXalpha C8-beta-D-glucuronoside(in). The catalysed reaction is bilirubin IXalpha bis-beta-D-glucuronoside(out) = bilirubin IXalpha bis-beta-D-glucuronoside(in). In terms of biological role, mediates the Na(+)-independent uptake of organic anions. Shows broad substrate specificity, can transport both organic anions such as bile acid taurocholate (cholyltaurine) and conjugated steroids (17-beta-glucuronosyl estradiol, dehydroepiandrosterone sulfate (DHEAS), and estrone 3-sulfate), as well as eicosanoid leukotriene C4, prostaglandin E2 and L-thyroxine (T4). Hydrogencarbonate/HCO3(-) acts as the probable counteranion that exchanges for organic anions. Shows a pH-sensitive substrate specificity towards sulfated steroids, taurocholate and T4 which may be ascribed to the protonation state of the binding site and leads to a stimulation of substrate transport in an acidic microenvironment. Involved in the clearance of bile acids and organic anions from the liver. Can take up bilirubin glucuronides from plasma into the liver, contributing to the detoxification-enhancing liver-blood shuttling loop. Transports coproporphyrin I and III, by-products of heme synthesis, and may be involved in their hepatic disposition. May contribute to regulate the transport of organic compounds in testes across the blood-testis-barrier. Can transport HMG-CoA reductase inhibitors (also known as statins) such as pitavastatin, a clinically important class of hypolipidemic drugs. May play an important role in plasma and tissue distribution of the structurally diverse chemotherapeutic drugs methotrexate and paclitaxel. May also transport antihypertension agents, such as the angiotensin-converting enzyme (ACE) inhibitor prodrug enalapril, and the highly selective angiotensin II AT1-receptor antagonist valsartan, in the liver. The sequence is that of Solute carrier organic anion transporter family member 1B3 (SLCO1B3) from Homo sapiens (Human).